Here is a 692-residue protein sequence, read N- to C-terminus: Elongation factor G (692 aa).

The tr-type G domain maps to 8-283 (EMTRNIGIMA…AVLDYMPAPT (276 aa)). GTP contacts are provided by residues 17 to 24 (AHIDAGKT), 81 to 85 (DTPGH), and 135 to 138 (NKMD).

It belongs to the TRAFAC class translation factor GTPase superfamily. Classic translation factor GTPase family. EF-G/EF-2 subfamily.

The protein localises to the cytoplasm. Its function is as follows. Catalyzes the GTP-dependent ribosomal translocation step during translation elongation. During this step, the ribosome changes from the pre-translocational (PRE) to the post-translocational (POST) state as the newly formed A-site-bound peptidyl-tRNA and P-site-bound deacylated tRNA move to the P and E sites, respectively. Catalyzes the coordinated movement of the two tRNA molecules, the mRNA and conformational changes in the ribosome. This Citrifermentans bemidjiense (strain ATCC BAA-1014 / DSM 16622 / JCM 12645 / Bem) (Geobacter bemidjiensis) protein is Elongation factor G.